Here is an 88-residue protein sequence, read N- to C-terminus: Envelope small membrane protein (88 aa).

Over 1 to 16 (MFNLFLTDTVWYVGQI) the chain is Virion surface. The helical transmembrane segment at 17 to 37 (IFIVAVCLMVTIIVVAFLASI) threads the bilayer. At 38-79 (KRCIQLCGLCNTLLLSPSIYLYNRSKQLYKYYNEEVRPPPLE) the chain is on the intravirion side.

It belongs to the betacoronaviruses E protein family. In terms of assembly, homopentamer. Interacts with membrane protein M in the budding compartment of the host cell, which is located between endoplasmic reticulum and the Golgi complex. Interacts with Nucleoprotein.

It localises to the host Golgi apparatus membrane. In terms of biological role, plays a central role in virus morphogenesis and assembly. Acts as a viroporin and self-assembles in host membranes forming pentameric protein-lipid pores that allow ion transport. Also plays a role in the induction of apoptosis. The sequence is that of Envelope small membrane protein from Mus musculus (Mouse).